The primary structure comprises 240 residues: 4-hydroxy-tetrahydrodipicolinate reductase (240 aa).

Residues 8–13 (GSTGKM), 78–80 (GTT), and 102–105 (SANM) each bind NAD(+). Residue His134 is the Proton donor/acceptor of the active site. A (S)-2,3,4,5-tetrahydrodipicolinate-binding site is contributed by His135. Lys138 (proton donor) is an active-site residue. Residue 144–145 (GT) participates in (S)-2,3,4,5-tetrahydrodipicolinate binding.

The protein belongs to the DapB family.

The protein localises to the cytoplasm. The catalysed reaction is (S)-2,3,4,5-tetrahydrodipicolinate + NAD(+) + H2O = (2S,4S)-4-hydroxy-2,3,4,5-tetrahydrodipicolinate + NADH + H(+). It carries out the reaction (S)-2,3,4,5-tetrahydrodipicolinate + NADP(+) + H2O = (2S,4S)-4-hydroxy-2,3,4,5-tetrahydrodipicolinate + NADPH + H(+). Its pathway is amino-acid biosynthesis; L-lysine biosynthesis via DAP pathway; (S)-tetrahydrodipicolinate from L-aspartate: step 4/4. In terms of biological role, catalyzes the conversion of 4-hydroxy-tetrahydrodipicolinate (HTPA) to tetrahydrodipicolinate. This chain is 4-hydroxy-tetrahydrodipicolinate reductase, found in Rickettsia canadensis (strain McKiel).